We begin with the raw amino-acid sequence, 279 residues long: uncharacterized protein (279 aa).

Positions 1-28 are disordered; it reads MGLFGGGNSKSTSNQTTNNENTNIATQG. The segment covering 9-23 has biased composition (low complexity); sequence SKSTSNQTTNNENTN. A helical membrane pass occupies residues 256–273; it reads KTLMIGIVAVSAAVGLYA.

It is found in the host membrane. This is an uncharacterized protein from Pseudoalteromonas espejiana (Bacteriophage PM2).